The following is a 542-amino-acid chain: Amino-acid acetyltransferase, mitochondrial (542 aa).

The transit peptide at 1–14 (MLFRRLLTTKVGYH) directs the protein to the mitochondrion. Positions 368 to 534 (AGSAQLPAHK…LREYITYVRD (167 aa)) constitute an N-acetyltransferase domain.

This sequence belongs to the acetyltransferase family.

Its subcellular location is the mitochondrion. It carries out the reaction L-glutamate + acetyl-CoA = N-acetyl-L-glutamate + CoA + H(+). It functions in the pathway amino-acid biosynthesis; L-arginine biosynthesis; N(2)-acetyl-L-ornithine from L-glutamate: step 1/4. In terms of biological role, N-acetylglutamate synthase involved in arginine biosynthesis. The chain is Amino-acid acetyltransferase, mitochondrial (ARG2) from Eremothecium gossypii (strain ATCC 10895 / CBS 109.51 / FGSC 9923 / NRRL Y-1056) (Yeast).